Consider the following 581-residue polypeptide: Proline--tRNA ligase (581 aa).

This sequence belongs to the class-II aminoacyl-tRNA synthetase family. ProS type 1 subfamily. As to quaternary structure, homodimer.

It is found in the cytoplasm. The catalysed reaction is tRNA(Pro) + L-proline + ATP = L-prolyl-tRNA(Pro) + AMP + diphosphate. Catalyzes the attachment of proline to tRNA(Pro) in a two-step reaction: proline is first activated by ATP to form Pro-AMP and then transferred to the acceptor end of tRNA(Pro). As ProRS can inadvertently accommodate and process non-cognate amino acids such as alanine and cysteine, to avoid such errors it has two additional distinct editing activities against alanine. One activity is designated as 'pretransfer' editing and involves the tRNA(Pro)-independent hydrolysis of activated Ala-AMP. The other activity is designated 'posttransfer' editing and involves deacylation of mischarged Ala-tRNA(Pro). The misacylated Cys-tRNA(Pro) is not edited by ProRS. This chain is Proline--tRNA ligase, found in Blochmanniella floridana.